Consider the following 241-residue polypeptide: uncharacterized protein (241 aa).

The segment at 19-53 (KRIGYGMGEKSSAGSSRDQTYSVKPASDVKDKKKV) is disordered. Residues 30 to 39 (SAGSSRDQTY) show a composition bias toward polar residues.

This is an uncharacterized protein from Ostreid herpesvirus 1 (isolate France) (OsHV-1).